The primary structure comprises 1141 residues: PR domain zinc finger protein 15 (1141 aa).

One can recognise an SET domain in the interval 49 to 159 (PNLEIRRLED…PGTELRVWYA (111 aa)). A C2H2-type 1 zinc finger spans residues 197 to 219 (WACKVCSATFLELQLLNEHLLGH). Positions 224-283 (KSLPPGSQSEAAAPEKEQDTPRGEPPAVPESENVATKEQKKKPRRGRKPKVSKAEQPLVI) are disordered. The segment covering 236-245 (APEKEQDTPR) has biased composition (basic and acidic residues). The segment covering 262–274 (QKKKPRRGRKPKV) has biased composition (basic residues). C2H2-type zinc fingers lie at residues 372 to 394 (YQCN…VRSH), 399 to 422 (FKCE…SYKH), 460 to 482 (FQCE…KKKH), and 487 to 509 (FACE…QRRH). Lys517 is covalently cross-linked (Glycyl lysine isopeptide (Lys-Gly) (interchain with G-Cter in SUMO2)). 2 consecutive C2H2-type zinc fingers follow at residues 536–558 (SGCP…LLTH) and 563–585 (YTCE…IHVH). Positions 604–623 (IGISSEENDDNSDESADSEP) are disordered. Acidic residues predominate over residues 609–620 (EENDDNSDESAD). C2H2-type zinc fingers lie at residues 626–649 (YSCK…MEVH), 654–676 (YGCS…MVIH), 690–712 (HPCE…KLIH), 718–740 (HACE…MRVH), 746–768 (YLCA…MKLH), 774–796 (YECK…CKRH), 802–824 (FMCE…KLIH), 830–853 (WTCS…QLTH), and 859–882 (QSCQ…RRKH). Disordered stretches follow at residues 922 to 973 (AEGK…DETN) and 1108 to 1141 (QTDV…MYSY). A compositionally biased stretch (basic residues) spans 927 to 938 (GKAAKRSHKRKQ). The span at 1121–1141 (PQQAAQPQVQAEQQQQQMYSY) shows a compositional bias: low complexity.

It belongs to the class V-like SAM-binding methyltransferase superfamily. In terms of tissue distribution, detected in all tissues examined.

It is found in the nucleus. Its function is as follows. Sequence-specific DNA-binding transcriptional regulator. Plays a role as a molecular node in a transcriptional network regulating embryonic development and cell fate decision. Stimulates the expression of upstream key transcriptional activators and repressors of the Wnt/beta-catenin and MAPK/ERK pathways, respectively, that are essential for naive pluripotency and self-renewal maintenance of embryonic stem cells (ESCs). Specifically promotes SPRY1 and RSPO1 transcription activation through recognition and direct binding of a specific DNA sequence in their promoter regions. Involved in early embryo development. Also plays a role in induced pluripotent stem cells (iPSCs) reprogramming. In Homo sapiens (Human), this protein is PR domain zinc finger protein 15.